Consider the following 36-residue polypeptide: Peptide POLARIS (36 aa).

This sequence belongs to the POLARIS peptide family. As to expression, mostly expressed in the embryonic root from the heart stage and in the seedling primary and lateral root tips, especially in the columella initials and lateral root cap. Also detectable in aerial parts of the seedling, sepals and leaves, principally in vascular tissues of the lamina and petiole.

Required for correct root growth and vascular development, probably by modulating both cell division rate in meristems and cell elongation in roots. Negative regulator of the ethylene signaling pathway that modulates microtubule cytoskeleton dynamics and auxin transport and homeostasis, and possibly cytokinin signaling, thus influencing root growth and lateral root development. The sequence is that of Peptide POLARIS (PLS) from Arabidopsis thaliana (Mouse-ear cress).